We begin with the raw amino-acid sequence, 197 residues long: Probable nicotinate-nucleotide adenylyltransferase (197 aa).

It belongs to the NadD family.

It catalyses the reaction nicotinate beta-D-ribonucleotide + ATP + H(+) = deamido-NAD(+) + diphosphate. The protein operates within cofactor biosynthesis; NAD(+) biosynthesis; deamido-NAD(+) from nicotinate D-ribonucleotide: step 1/1. In terms of biological role, catalyzes the reversible adenylation of nicotinate mononucleotide (NaMN) to nicotinic acid adenine dinucleotide (NaAD). This Leptospira borgpetersenii serovar Hardjo-bovis (strain JB197) protein is Probable nicotinate-nucleotide adenylyltransferase.